Reading from the N-terminus, the 412-residue chain is Putative oxidoreductase bli-4, mitochondrial (412 aa).

Residues Met-1 to Tyr-55 constitute a mitochondrion transit peptide. The NADP(+) site is built by Ile-108, Asn-120, Asn-186, Tyr-269, Lys-273, Val-308, Thr-310, and Gln-312. The Proton donor role is filled by Tyr-269. The active-site Lowers pKa of active site Tyr is the Lys-273.

This sequence belongs to the short-chain dehydrogenases/reductases (SDR) family.

The protein resides in the mitochondrion. Functionally, may play a role as an NAD-dependent dehydrogenase in the mitochondria. In Neurospora crassa (strain ATCC 24698 / 74-OR23-1A / CBS 708.71 / DSM 1257 / FGSC 987), this protein is Putative oxidoreductase bli-4, mitochondrial (bli-4).